Reading from the N-terminus, the 1269-residue chain is MEQTGPDVPERVGAMSGGWTAEQLEAISARGGDVLVAASAGTGKTAVLAERIIRRITDPIKPVDVDRLLVVTFTSAAAAEMRERIRLALAREISRRPESGHLQRQAALLGRACISTVHSFCLDLLRQHFYRIGLDPSFRVADETEAALIQTGALEEVFERRYAAEDNIFAALVDCYGGRHDDALLQELVLDAYKFARSTPWPEDWLDGLAEGFNLPGGASFDRTPWSAVLKQAAEIELAGARADLEAALRIAREPGGPQAYLANLEQEHDLVCRLLQSCRTNAPWAELYSYFKEVVFSPLKQCRKEDADLKLAGQARNFRESAKKKVMQVKSRYFSLPPEDLCADLRRMAPLIKELAGLVREFDATYRKAKAARGVVDFNDLEHYCLQVLAEKGPSGAVPSQVAHELQEKFVEVLVDEYQDINAVQETILQMVSRKGEGQSNLFMVGDVKQSIYRFRLAEPGLFLKKYASFSAGTGGGQGRRLALTANFRSRQGVVSAVNFIFKQIMTPAVGEMAYGSDAMLVYGADYPPVPEGQGNYEEAVELHLVERGPAGKDGGGDDPAGEEADGGVEAVEEIEEELEAGQKEARLVARRIKELLGGSPGGEHALEIYDRELKKYRPLTYRDVAVLLRATAGYANSFVEEFRREGIPAYAELSTGYFESTEVETVISLLKVIDNPRQDIPLAGVLRSPAVGLKAGDLARIRLASPRGDFYDAVVAASLAGQGELSERLADFLKKLEEWRTIARQGTLADLIWAVYRDTGYYDFTGCLPGGGQRQANLRALHDRARQFETTAFRGLFLFLRFIERLREGGRDFGAARLLSEKENVVRIMSIHKSKGLEFPVVFVAGLGRNFNFRNLNKAVLFHKDLGLGPQLVDAEARVTRPTAAKLALKHRLKMEALAEEMRILYVAMTRAQEKLILVGSARNLPGCARRWCGPAGTAGWALPDGFLAGAGTCLDWLMAALARHRDGAAIRELAACAEEPPAEVAADRSRWRVFFSDSRGRSAEMAEEPVLLAKVRRMEPLEPAGPLAGMIKARLEWSYPAIAVLGRPAKAAVTELKRRFDQLAAGEEQYGEGHFESFRLTAGRPLFMQEKRGLTAAEAGEALHLVMQHLDLTGSLDITAVRSQIEDMVWRELLTPEQAAAVPAEKIAAFFAGPLGRRLLAGFQVLRELPFTMAVQAAEIYPELVPYPGEAVLVQGVIDCLVDEGDGYLLLDYKTGKRPLGRPEEAARRYCGQLNIYARAVESILGRKVKEKYLYLFEPGLEIRCD.

In terms of domain architecture, UvrD-like helicase ATP-binding spans 17–492 (GGWTAEQLEA…LALTANFRSR (476 aa)). 38 to 45 (ASAGTGKT) contributes to the ATP binding site. Residues 541–838 (AVELHLVERG…RIMSIHKSKG (298 aa)) enclose the UvrD-like helicase C-terminal domain.

The protein belongs to the helicase family. AddA subfamily. Heterodimer of AddA and AddB/RexB. It depends on Mg(2+) as a cofactor.

The enzyme catalyses Couples ATP hydrolysis with the unwinding of duplex DNA by translocating in the 3'-5' direction.. It catalyses the reaction ATP + H2O = ADP + phosphate + H(+). In terms of biological role, the heterodimer acts as both an ATP-dependent DNA helicase and an ATP-dependent, dual-direction single-stranded exonuclease. Recognizes the chi site generating a DNA molecule suitable for the initiation of homologous recombination. The AddA nuclease domain is required for chi fragment generation; this subunit has the helicase and 3' -&gt; 5' nuclease activities. This Pelotomaculum thermopropionicum (strain DSM 13744 / JCM 10971 / SI) protein is ATP-dependent helicase/nuclease subunit A.